The chain runs to 653 residues: tRNA 5-methylaminomethyl-2-thiouridine biosynthesis bifunctional protein MnmC (653 aa).

The tRNA (mnm(5)s(2)U34)-methyltransferase stretch occupies residues 1-236; that stretch reads MPDRLVPATL…KFAMLVGEYA (236 aa). Residues 260–653 form an FAD-dependent cmnm(5)s(2)U34 oxidoreductase region; it reads IGAGLAGCAL…IRALRGRKLG (394 aa).

The protein in the N-terminal section; belongs to the methyltransferase superfamily. tRNA (mnm(5)s(2)U34)-methyltransferase family. In the C-terminal section; belongs to the DAO family. The cofactor is FAD.

It is found in the cytoplasm. It catalyses the reaction 5-aminomethyl-2-thiouridine(34) in tRNA + S-adenosyl-L-methionine = 5-methylaminomethyl-2-thiouridine(34) in tRNA + S-adenosyl-L-homocysteine + H(+). In terms of biological role, catalyzes the last two steps in the biosynthesis of 5-methylaminomethyl-2-thiouridine (mnm(5)s(2)U) at the wobble position (U34) in tRNA. Catalyzes the FAD-dependent demodification of cmnm(5)s(2)U34 to nm(5)s(2)U34, followed by the transfer of a methyl group from S-adenosyl-L-methionine to nm(5)s(2)U34, to form mnm(5)s(2)U34. The chain is tRNA 5-methylaminomethyl-2-thiouridine biosynthesis bifunctional protein MnmC from Burkholderia vietnamiensis (strain G4 / LMG 22486) (Burkholderia cepacia (strain R1808)).